Reading from the N-terminus, the 41-residue chain is Large ribosomal subunit protein bL36 (41 aa).

It belongs to the bacterial ribosomal protein bL36 family.

This Methylorubrum extorquens (strain CM4 / NCIMB 13688) (Methylobacterium extorquens) protein is Large ribosomal subunit protein bL36.